The primary structure comprises 149 residues: MAARLMKEYKVLQNEEFEDILLYPRDESDLYRWVAIIKGPPDTPYENGKFELDISVPTNYPLQPPTIKFVTKIFHPNIHFKTGEICLDLLKTSWSAIYTLQSVCRSIIALLSLPEADSPLNCDAGNLIRNGDVKGHDSLARMYTRLYGC.

Residues 1–149 (MAARLMKEYK…ARMYTRLYGC (149 aa)) form the UBC core domain. Residue Cys-86 is the Glycyl thioester intermediate of the active site.

It belongs to the ubiquitin-conjugating enzyme family.

The enzyme catalyses S-ubiquitinyl-[E1 ubiquitin-activating enzyme]-L-cysteine + [E2 ubiquitin-conjugating enzyme]-L-cysteine = [E1 ubiquitin-activating enzyme]-L-cysteine + S-ubiquitinyl-[E2 ubiquitin-conjugating enzyme]-L-cysteine.. It participates in protein modification; protein ubiquitination. Catalyzes the covalent attachment of ubiquitin to other proteins. Essential for peroxisome biogenesis. In Dictyostelium discoideum (Social amoeba), this protein is Ubiquitin-conjugating enzyme E2 pex4 (pex4).